Here is a 1088-residue protein sequence, read N- to C-terminus: ATP-dependent helicase/deoxyribonuclease subunit B (1088 aa).

It belongs to the helicase family. AddB/RexB type 2 subfamily. In terms of assembly, heterodimer of AddA and RexB. Requires Mg(2+) as cofactor.

In terms of biological role, the heterodimer acts as both an ATP-dependent DNA helicase and an ATP-dependent, dual-direction single-stranded exonuclease. Recognizes the chi site generating a DNA molecule suitable for the initiation of homologous recombination. This subunit has 5' -&gt; 3' nuclease activity but not helicase activity. The protein is ATP-dependent helicase/deoxyribonuclease subunit B of Streptococcus suis (strain 98HAH33).